The sequence spans 160 residues: tRNA (cytidine(56)-2'-O)-methyltransferase (160 aa).

S-adenosyl-L-methionine is bound by residues Leu-68, Gly-94 to Val-98, and Ile-112 to Glu-119.

The protein belongs to the aTrm56 family. As to quaternary structure, homodimer.

Its subcellular location is the cytoplasm. The catalysed reaction is cytidine(56) in tRNA + S-adenosyl-L-methionine = 2'-O-methylcytidine(56) in tRNA + S-adenosyl-L-homocysteine + H(+). Specifically catalyzes the AdoMet-dependent 2'-O-ribose methylation of cytidine at position 56 in tRNAs. The chain is tRNA (cytidine(56)-2'-O)-methyltransferase from Saccharolobus solfataricus (strain ATCC 35092 / DSM 1617 / JCM 11322 / P2) (Sulfolobus solfataricus).